A 203-amino-acid polypeptide reads, in one-letter code: ATP-dependent Clp protease proteolytic subunit 2 (203 aa).

S100 serves as the catalytic Nucleophile. H125 is an active-site residue.

It belongs to the peptidase S14 family. Fourteen ClpP subunits assemble into 2 heptameric rings which stack back to back to give a disk-like structure with a central cavity, resembling the structure of eukaryotic proteasomes.

It is found in the cytoplasm. It catalyses the reaction Hydrolysis of proteins to small peptides in the presence of ATP and magnesium. alpha-casein is the usual test substrate. In the absence of ATP, only oligopeptides shorter than five residues are hydrolyzed (such as succinyl-Leu-Tyr-|-NHMec, and Leu-Tyr-Leu-|-Tyr-Trp, in which cleavage of the -Tyr-|-Leu- and -Tyr-|-Trp bonds also occurs).. Functionally, cleaves peptides in various proteins in a process that requires ATP hydrolysis. Has a chymotrypsin-like activity. Plays a major role in the degradation of misfolded proteins. The sequence is that of ATP-dependent Clp protease proteolytic subunit 2 from Nocardia farcinica (strain IFM 10152).